A 77-amino-acid chain; its full sequence is Serine protease inhibitor 1 (77 aa).

The first 17 residues, 1-17 (MMFTPLIVLTLLVLATA), serve as a signal peptide directing secretion. Intrachain disulfides connect Cys-21–Cys-53, Cys-30–Cys-48, Cys-33–Cys-44, Cys-37–Cys-74, and Cys-55–Cys-68. The 54-residue stretch at 21-74 (CGPNEQWSDCPGCELQCGESDKPCPAMCGDPKCYCSPDQYRRIPDGRCIRKIQC) folds into the TIL domain.

It is found in the secreted. Functionally, defends the organism against the host's proteinases. The protein is Serine protease inhibitor 1 of Anisakis simplex (Herring worm).